The chain runs to 2279 residues: Zinc finger protein 318 (2279 aa).

Composition is skewed to low complexity over residues Met1 to Ser12 and Ser25 to Ser39. 2 disordered regions span residues Met1–Cys140 and Arg164–Asp189. The tract at residues Met1 to Gln1092 is interaction with AR. Ser40 bears the Phosphoserine mark. Basic residues predominate over residues Pro53–Arg67. A phosphoserine mark is found at Ser79 and Ser81. Basic and acidic residues predominate over residues Ser110 to Ser132. Phosphoserine is present on residues Ser136 and Ser173. Residues Asn177–Asp188 are compositionally biased toward acidic residues. Tyr205 carries the post-translational modification Phosphotyrosine. Ser207 and Ser214 each carry phosphoserine. Disordered stretches follow at residues Thr279–Gly346 and Leu397–His416. Positions Leu311–Arg333 are enriched in basic and acidic residues. A coiled-coil region spans residues Phe315–Asp343. Ser464, Ser472, Ser501, and Ser527 each carry phosphoserine. Disordered regions lie at residues Leu514–Asp533 and Gly540–Leu570. Glycyl lysine isopeptide (Lys-Gly) (interchain with G-Cter in SUMO2) cross-links involve residues Lys547, Lys553, Lys566, and Lys578. Residues Phe664 to His683 are compositionally biased toward basic and acidic residues. Residues Phe664 to Ser709 are disordered. Thr842 is subject to Phosphothreonine. A coiled-coil region spans residues Glu876 to Leu980. 2 stretches are compositionally biased toward basic and acidic residues: residues Gln922–Leu941 and Gln989–Glu1012. 2 disordered regions span residues Gln922 to Leu942 and Gln989 to Leu1051. At Ser1010 the chain carries Phosphoserine. Low complexity predominate over residues Lys1013–Asn1023. Residues Lys1024 to Arg1034 are compositionally biased toward basic and acidic residues. At Ser1037 the chain carries Phosphoserine. 2 consecutive Matrin-type zinc fingers follow at residues Ala1063–Tyr1097 and Phe1136–Lys1166. Basic and acidic residues-rich tracts occupy residues Arg1195 to Asp1235, Asn1242 to Arg1251, Gln1258 to Ser1267, Lys1279 to Ser1288, and Ser1296 to Lys1316. Residues Arg1195–Pro1319 are disordered. 2 positions are modified to phosphoserine: Ser1243 and Ser1267. Ser1420 bears the Phosphoserine mark. Disordered stretches follow at residues Ala1428 to Ala1463, Gly1577 to His1628, Ser1702 to Leu1735, and Glu1753 to Ile1775. The segment covering Ile1440 to Ala1462 has biased composition (pro residues). Over residues Ser1602–Ser1623 the composition is skewed to low complexity. Basic and acidic residues predominate over residues Thr1708 to Leu1719. Ser1713 carries the phosphoserine modification. Over residues Pro1724–Gln1734 the composition is skewed to pro residues. The stretch at Glu1768–Ile1792 forms a coiled coil. Residues Ser1856, Ser1896, Ser1971, Ser2030, Ser2035, Ser2091, Ser2101, Ser2189, Ser2192, and Ser2243 each carry the phosphoserine modification. The interval Asp2252 to Asn2279 is disordered.

In terms of assembly, homodimer. Heterodimer of isoform 1 and isoform 2. Isoform 1 and isoform 2 interact with AR. As to expression, expressed in endocrine tissue.

It is found in the nucleus. Functionally, acts as a transcriptional corepressor for AR-mediated transactivation function. May act as a transcriptional regulator during spermatogenesis and, in particular, during meiotic division. Acts as a transcriptional coactivator for AR-mediated transactivation function. May act as a transcriptional regulator during spermatogenesis and, in particular, during meiotic division. This Homo sapiens (Human) protein is Zinc finger protein 318 (ZNF318).